The following is a 319-amino-acid chain: Aliphatic sulfonates import ATP-binding protein SsuB 1 (319 aa).

The ABC transporter domain maps to 63-282 (VTLSGVSKRF…ARASAAFAAL (220 aa)). 95-102 (GRSGCGKS) contacts ATP.

The protein belongs to the ABC transporter superfamily. Aliphatic sulfonates importer (TC 3.A.1.17.2) family. In terms of assembly, the complex is composed of two ATP-binding proteins (SsuB), two transmembrane proteins (SsuC) and a solute-binding protein (SsuA).

It is found in the cell inner membrane. The enzyme catalyses ATP + H2O + aliphatic sulfonate-[sulfonate-binding protein]Side 1 = ADP + phosphate + aliphatic sulfonateSide 2 + [sulfonate-binding protein]Side 1.. Part of the ABC transporter complex SsuABC involved in aliphatic sulfonates import. Responsible for energy coupling to the transport system. This is Aliphatic sulfonates import ATP-binding protein SsuB 1 from Burkholderia lata (strain ATCC 17760 / DSM 23089 / LMG 22485 / NCIMB 9086 / R18194 / 383).